The sequence spans 527 residues: ARS-binding protein 2 (527 aa).

Disordered regions lie at residues 160-184 (PDVN…HSAS), 219-265 (SHHM…NSHN), and 282-344 (IDPD…IKRL). Positions 164–177 (SSSISTMRTSTSPS) are enriched in low complexity. The span at 225-239 (RGSQQAHQTTPQNHS) shows a compositional bias: polar residues. A compositionally biased stretch (basic and acidic residues) spans 284–303 (PDWHQWPDDLRDVSSPKESD). Ser297, Ser298, and Ser302 each carry phosphoserine. The span at 328–343 (PRKRGRPPGARNKIKR) shows a compositional bias: basic residues.

The protein localises to the nucleus. In terms of biological role, binds, preferentially, to the Maundrell ARS consensus sequence within ARS3002. The chain is ARS-binding protein 2 (abp2) from Schizosaccharomyces pombe (strain 972 / ATCC 24843) (Fission yeast).